The primary structure comprises 198 residues: Probable GTP-binding protein EngB (198 aa).

The EngB-type G domain occupies 27 to 198 (DLPEVALAGR…ESWDTILSEL (172 aa)). GTP-binding positions include 35 to 42 (GRSNVGKS), 62 to 66 (GKTQL), 80 to 83 (DVPG), 147 to 150 (TKAD), and 179 to 181 (FSS). S42 and T64 together coordinate Mg(2+).

This sequence belongs to the TRAFAC class TrmE-Era-EngA-EngB-Septin-like GTPase superfamily. EngB GTPase family. Requires Mg(2+) as cofactor.

Functionally, necessary for normal cell division and for the maintenance of normal septation. This is Probable GTP-binding protein EngB from Streptococcus agalactiae serotype Ia (strain ATCC 27591 / A909 / CDC SS700).